A 291-amino-acid chain; its full sequence is Small ribosomal subunit biogenesis GTPase RsgA (291 aa).

The 159-residue stretch at 63 to 221 (KNEIKRPPVS…IADTPGFSAL (159 aa)) folds into the CP-type G domain. GTP-binding positions include 112–115 (TKKD) and 164–172 (GQSGVGKST). Zn(2+)-binding residues include C245, C250, H252, and C258.

This sequence belongs to the TRAFAC class YlqF/YawG GTPase family. RsgA subfamily. Monomer. Associates with 30S ribosomal subunit, binds 16S rRNA. Requires Zn(2+) as cofactor.

It is found in the cytoplasm. In terms of biological role, one of several proteins that assist in the late maturation steps of the functional core of the 30S ribosomal subunit. Helps release RbfA from mature subunits. May play a role in the assembly of ribosomal proteins into the subunit. Circularly permuted GTPase that catalyzes slow GTP hydrolysis, GTPase activity is stimulated by the 30S ribosomal subunit. The chain is Small ribosomal subunit biogenesis GTPase RsgA from Staphylococcus saprophyticus subsp. saprophyticus (strain ATCC 15305 / DSM 20229 / NCIMB 8711 / NCTC 7292 / S-41).